The sequence spans 295 residues: MFPNSKVELPKSTPVRRIGLSVQYEGSNFCGWQRQPQAVSVQQVLEEAISQLDPQRPIQAVAAGRTDAGVHAAGQVVHFDCCGPIPAERWAPALNGRLPNTIRVREAVARPASWHACHSATYRRYRYTIYNGRRPNLFLTPWSWHRYHVRLDETVMQVALEGLLGLQDLSAFQRTGSRRAHARTTVQDVKIERQGDLIMIEIQASGFLYGMVRLLMGQLVALGEHRLNLQTFERRWKEKRRQEVKEAAPAQGLCLLRAGYEEDIFSKGGWYDCQPRYSLGANDPPLDPPSAPESS.

Catalysis depends on Asp67, which acts as the Nucleophile. Tyr125 contributes to the substrate binding site.

Belongs to the tRNA pseudouridine synthase TruA family. In terms of assembly, homodimer.

It catalyses the reaction uridine(38/39/40) in tRNA = pseudouridine(38/39/40) in tRNA. Functionally, formation of pseudouridine at positions 38, 39 and 40 in the anticodon stem and loop of transfer RNAs. The protein is tRNA pseudouridine synthase A of Prochlorococcus marinus (strain MIT 9303).